Here is a 238-residue protein sequence, read N- to C-terminus: Large ribosomal subunit protein uL3 (238 aa).

Glutamine 157 is modified (N5-methylglutamine).

Belongs to the universal ribosomal protein uL3 family. In terms of assembly, part of the 50S ribosomal subunit. Forms a cluster with proteins L14 and L19. Post-translationally, methylated by PrmB.

Its function is as follows. One of the primary rRNA binding proteins, it binds directly near the 3'-end of the 23S rRNA, where it nucleates assembly of the 50S subunit. The chain is Large ribosomal subunit protein uL3 from Ruthia magnifica subsp. Calyptogena magnifica.